Reading from the N-terminus, the 296-residue chain is Cytidine deaminase (296 aa).

CMP/dCMP-type deaminase domains follow at residues 52-167 (SPVE…YLPD) and 191-296 (QGHD…YISL). Residue 93 to 95 (NQE) participates in substrate binding. A Zn(2+)-binding site is contributed by His-106. The active-site Proton donor is Glu-108. Residues Cys-133 and Cys-136 each contribute to the Zn(2+) site.

Belongs to the cytidine and deoxycytidylate deaminase family. In terms of assembly, homodimer. It depends on Zn(2+) as a cofactor.

It carries out the reaction cytidine + H2O + H(+) = uridine + NH4(+). The enzyme catalyses 2'-deoxycytidine + H2O + H(+) = 2'-deoxyuridine + NH4(+). In terms of biological role, this enzyme scavenges exogenous and endogenous cytidine and 2'-deoxycytidine for UMP synthesis. The sequence is that of Cytidine deaminase from Mannheimia succiniciproducens (strain KCTC 0769BP / MBEL55E).